The primary structure comprises 275 residues: Reticulon-like protein B1 (275 aa).

Basic and acidic residues-rich tracts occupy residues 1–10 and 20–38; these read MAEEHKHDES and VVER…HHGG. The disordered stretch occupies residues 1 to 68; sequence MAEEHKHDES…PSSPSSSMKS (68 aa). A2 carries the post-translational modification N-acetylalanine. Positions 59–68 are enriched in low complexity; sequence PSSPSSSMKS. The region spanning 89–274 is the Reticulon domain; it reads PADIFMWKNK…PLGPLKNKKK (186 aa). 3 helical membrane-spanning segments follow: residues 99–119, 120–140, and 194–214; these read KMSG…ELME, YHLL…LFLW, and FLIA…FNFL.

In terms of assembly, interacts with VirB2. In terms of tissue distribution, predominantly expressed in root tissues.

The protein localises to the endoplasmic reticulum membrane. It localises to the cell membrane. In terms of biological role, plays a role in the Agrobacterium-mediated plant transformation via its interaction with VirB2, the major component of the T-pilus. The protein is Reticulon-like protein B1 (RTNLB1) of Arabidopsis thaliana (Mouse-ear cress).